A 475-amino-acid polypeptide reads, in one-letter code: Ribulose bisphosphate carboxylase large chain (475 aa).

Residues 1-2 (MS) constitute a propeptide that is removed on maturation. At proline 3 the chain carries N-acetylproline. Lysine 14 bears the N6,N6,N6-trimethyllysine mark. Residues asparagine 123 and threonine 173 each contribute to the substrate site. Residue lysine 175 is the Proton acceptor of the active site. Lysine 177 contacts substrate. Positions 201, 203, and 204 each coordinate Mg(2+). Lysine 201 carries the post-translational modification N6-carboxylysine. Histidine 294 (proton acceptor) is an active-site residue. Arginine 295, histidine 327, and serine 379 together coordinate substrate.

The protein belongs to the RuBisCO large chain family. Type I subfamily. Heterohexadecamer of 8 large chains and 8 small chains; disulfide-linked. The disulfide link is formed within the large subunit homodimers. Mg(2+) is required as a cofactor. Post-translationally, the disulfide bond which can form in the large chain dimeric partners within the hexadecamer appears to be associated with oxidative stress and protein turnover.

It localises to the plastid. The protein localises to the chloroplast. The enzyme catalyses 2 (2R)-3-phosphoglycerate + 2 H(+) = D-ribulose 1,5-bisphosphate + CO2 + H2O. It carries out the reaction D-ribulose 1,5-bisphosphate + O2 = 2-phosphoglycolate + (2R)-3-phosphoglycerate + 2 H(+). Functionally, ruBisCO catalyzes two reactions: the carboxylation of D-ribulose 1,5-bisphosphate, the primary event in carbon dioxide fixation, as well as the oxidative fragmentation of the pentose substrate in the photorespiration process. Both reactions occur simultaneously and in competition at the same active site. This chain is Ribulose bisphosphate carboxylase large chain, found in Larix occidentalis (Western larch).